We begin with the raw amino-acid sequence, 122 residues long: Large ribosomal subunit protein uL14 (122 aa).

The protein belongs to the universal ribosomal protein uL14 family. Part of the 50S ribosomal subunit. Forms a cluster with proteins L3 and L19. In the 70S ribosome, L14 and L19 interact and together make contacts with the 16S rRNA in bridges B5 and B8.

Its function is as follows. Binds to 23S rRNA. Forms part of two intersubunit bridges in the 70S ribosome. In Chloroflexus aggregans (strain MD-66 / DSM 9485), this protein is Large ribosomal subunit protein uL14.